A 423-amino-acid polypeptide reads, in one-letter code: Gamma-glutamyl phosphate reductase 2 (423 aa).

Belongs to the gamma-glutamyl phosphate reductase family.

It is found in the cytoplasm. The catalysed reaction is L-glutamate 5-semialdehyde + phosphate + NADP(+) = L-glutamyl 5-phosphate + NADPH + H(+). Its pathway is amino-acid biosynthesis; L-proline biosynthesis; L-glutamate 5-semialdehyde from L-glutamate: step 2/2. Functionally, catalyzes the NADPH-dependent reduction of L-glutamate 5-phosphate into L-glutamate 5-semialdehyde and phosphate. The product spontaneously undergoes cyclization to form 1-pyrroline-5-carboxylate. This chain is Gamma-glutamyl phosphate reductase 2, found in Bacillus licheniformis (strain ATCC 14580 / DSM 13 / JCM 2505 / CCUG 7422 / NBRC 12200 / NCIMB 9375 / NCTC 10341 / NRRL NRS-1264 / Gibson 46).